The following is an 854-amino-acid chain: N-terminal acetyltransferase A complex subunit NAT1 (854 aa).

Serine 2 is modified (N-acetylserine). TPR repeat units lie at residues 20-53, 54-87, 91-124, 126-162, 241-274, 384-417, and 452-485; these read ENDQFLEALKLYEGKQYKKSLKLLDAILKKDGSH, VDSLALKGLDLYSVGEKDDAASYVANAIRKIEGA, PICCHVLGIYMRNTKEYKESIKWFTAALNNGSTN, QIYRDLATLQSQIGDFKNALVSRKKYWEAFLGYRANW, FGLLERKATIYMKLGQLKDASIVYRTLIKRNPDN, IWTNYYLSQHFLFLKDFPKAQEYIDAALDHTPTL, and RFINCKTVKYFLRANNIDKAVEVASLFTKNDDSV. Residues 623–667 are a coiled coil; that stretch reads LKRKSDSLDENSDEIQNNGQNSSSQKKKAKKEAAAMNKRKETEAK. The interval 626–668 is disordered; sequence KSDSLDENSDEIQNNGQNSSSQKKKAKKEAAAMNKRKETEAKS. Serine 674 carries the phosphoserine modification. The TPR 8 repeat unit spans residues 728–761; the sequence is ALCFASLNKFAKRFGTTSGLFGSMAIVLLHATRN.

In terms of assembly, component of the N-terminal acetyltransferase A (NatA) complex, which is composed of ARD1, NAT1 and NAT5. Can self-associate. NAT1 associates with the nascent polypeptide chain and the ribosome. Post-translationally, the N-terminus is blocked.

It is found in the cytoplasm. Its function is as follows. Non-catalytic component of the NatA N-terminal acetyltransferase, which catalyzes acetylation of proteins beginning with Met-Ser, Met-Gly and Met-Ala. N-acetylation plays a role in normal eukaryotic translation and processing, protect against proteolytic degradation and protein turnover. NAT1 anchors ARD1 and NAT5 to the ribosome and may present the N termini of nascent polypeptides for acetylation. The sequence is that of N-terminal acetyltransferase A complex subunit NAT1 (NAT1) from Saccharomyces cerevisiae (strain ATCC 204508 / S288c) (Baker's yeast).